The chain runs to 63 residues: Conotoxin Cal6.28 (63 aa).

An N-terminal signal peptide occupies residues 1–22 (MKLTCVLIVAVLILTACQVIAA). Disulfide bonds link cysteine 34-cysteine 45, cysteine 37-cysteine 51, and cysteine 44-cysteine 58.

Belongs to the conotoxin O1 superfamily. Expressed by the venom duct.

It is found in the secreted. Functionally, probable neurotoxin. The protein is Conotoxin Cal6.28 of Californiconus californicus (California cone).